Reading from the N-terminus, the 1399-residue chain is DNA-directed RNA polymerase subunit beta' (1399 aa).

Residues cysteine 70, cysteine 72, cysteine 85, and cysteine 88 each coordinate Zn(2+). Mg(2+) contacts are provided by aspartate 460, aspartate 462, and aspartate 464. Zn(2+) is bound by residues cysteine 814, cysteine 888, cysteine 895, and cysteine 898. A disordered region spans residues 1367–1399 (SERKRQRDLGKPQRVSASEAEAALTEALNSSGN). Positions 1382–1399 (SASEAEAALTEALNSSGN) are enriched in low complexity.

Belongs to the RNA polymerase beta' chain family. As to quaternary structure, the RNAP catalytic core consists of 2 alpha, 1 beta, 1 beta' and 1 omega subunit. When a sigma factor is associated with the core the holoenzyme is formed, which can initiate transcription. It depends on Mg(2+) as a cofactor. The cofactor is Zn(2+).

The catalysed reaction is RNA(n) + a ribonucleoside 5'-triphosphate = RNA(n+1) + diphosphate. In terms of biological role, DNA-dependent RNA polymerase catalyzes the transcription of DNA into RNA using the four ribonucleoside triphosphates as substrates. The polypeptide is DNA-directed RNA polymerase subunit beta' (Pseudomonas aeruginosa (strain UCBPP-PA14)).